A 30-amino-acid chain; its full sequence is SVTPIVCGETCFGGTCNTPGCSCSWPICTK.

Residues 1–30 (SVTPIVCGETCFGGTCNTPGCSCSWPICTK) constitute a cross-link (cyclopeptide (Ser-Lys)). 3 disulfides stabilise this stretch: Cys7–Cys21, Cys11–Cys23, and Cys16–Cys28.

This is a cyclic peptide.

In terms of biological role, probably participates in a plant defense mechanism. In Psychotria leiocarpa, this protein is Cyclotide psyleio E.